The chain runs to 518 residues: Filamentous growth regulator 15 (518 aa).

A compositionally biased stretch (polar residues) spans 1–41 (MESTLSVSDEKLTNSSTALNNCGDNKESSQVLTTANTTTDN). 3 disordered regions span residues 1–63 (MEST…SKER), 75–101 (VDPNQQSKNTVSDSVQDTTGVPSDHGK), and 261–307 (KSRS…KQHR). Over residues 42 to 52 (QQVQPKSQHQQ) the composition is skewed to low complexity. The span at 77–95 (PNQQSKNTVSDSVQDTTGV) shows a compositional bias: polar residues. Over residues 262 to 274 (SRSRSKVTKKRKV) the composition is skewed to basic residues. The segment covering 283 to 298 (SNTATATTSVTTPDAN) has biased composition (low complexity). A C2H2-type zinc finger spans residues 374-406 (HECQLPSAEEPHKLCLRRFSRKYELIRHQETVH). A disordered region spans residues 492-518 (RKSSGDDTNYMETSDLESGEEEVTFNK). Acidic residues predominate over residues 505-518 (SDLESGEEEVTFNK).

The protein localises to the nucleus. In terms of biological role, probable transcription factor involved in the regulation of filamentous growth. The protein is Filamentous growth regulator 15 (FGR15) of Candida albicans (strain SC5314 / ATCC MYA-2876) (Yeast).